A 186-amino-acid polypeptide reads, in one-letter code: UPF0301 protein PM1869 (186 aa).

The protein belongs to the UPF0301 (AlgH) family.

The sequence is that of UPF0301 protein PM1869 from Pasteurella multocida (strain Pm70).